We begin with the raw amino-acid sequence, 145 residues long: Lysozyme-like protein 4 (145 aa).

Residues 1–19 (MKASVVLSLIGYLVVPSDT) form the signal peptide. The C-type lysozyme domain occupies 20–145 (AVLGRCVVAK…LARWLDGCKL (126 aa)). 4 disulfides stabilise this stretch: Cys-25–Cys-143, Cys-49–Cys-130, Cys-84–Cys-95, and Cys-91–Cys-109. Glu-54 is a catalytic residue.

The protein belongs to the glycosyl hydrolase 22 family. Monomer.

It localises to the secreted. The protein resides in the cytoplasmic vesicle. Its subcellular location is the secretory vesicle. It is found in the acrosome. The protein localises to the cell projection. It localises to the cilium. The protein resides in the flagellum. In terms of biological role, may be involved in fertilization. Has no detectable bacteriolytic and lysozyme activities in vitro. The protein is Lysozyme-like protein 4 (LYZL4) of Bos taurus (Bovine).